Here is a 541-residue protein sequence, read N- to C-terminus: tRNA uridine(34) acetyltransferase (541 aa).

A radical S-adenosyl-L-methionine (rSAM) region spans residues 76-336; it reads KPVRTISGVA…GEYKPYREEE (261 aa). The Radical SAM core domain maps to 79 to 350; sequence RTISGVAVVA…ISYAKSIMPK (272 aa). Residues cysteine 96, cysteine 101, and cysteine 104 each coordinate [4Fe-4S] cluster. Residues lysine 156, 467–470, 491–493, and tyrosine 524 contribute to the acetyl-CoA site; these read QLHV and YGR. The N-acetyltransferase domain occupies 401 to 541; it reads VMYKKGIMPD…VGAYMGKYLE (141 aa).

It belongs to the ELP3 family. [4Fe-4S] cluster serves as cofactor.

It catalyses the reaction uridine(34) in tRNA + acetyl-CoA + S-adenosyl-L-methionine + H2O = 5-(carboxymethyl)uridine(34) in tRNA + 5'-deoxyadenosine + L-methionine + CoA + 2 H(+). It functions in the pathway tRNA modification. Functionally, tRNA uridine(34) acetyltransferase, which mediates formation of carboxymethyluridine in the wobble base at position 34 in tRNAs. The proposed mechanism is the following: (i) recruits S-adenosyl-L-methionine and cleaves it to generate a 5'-deoxyadenosine radical (5'-dA) in the radical S-adenosyl-L-methionine (rSAM) region, (ii) hydrolyzes acetyl-CoA in the N-acetyltransferase domain and (iii) an acetyl radical is formed by the products of the two domains and (iv) is transferred onto the C5 position of uridine(34) in the bound tRNA molecule. Does not show protein lysine acetyltransferase activity. The sequence is that of tRNA uridine(34) acetyltransferase from Methanocaldococcus jannaschii (strain ATCC 43067 / DSM 2661 / JAL-1 / JCM 10045 / NBRC 100440) (Methanococcus jannaschii).